We begin with the raw amino-acid sequence, 765 residues long: MSNQGVRRNGPVKLRLTVLCAKNLVKKDFFRLPDPFAKVVVDGSGQCHSTDTVRNTLDPKWNQHYDLYIGKSDSITISVWNHKKIHKKQGAGFLGCVRLLSNSINRLKDTGYQRLDLNKLGPNDSDTVRGQIVVSLQSRDRIGSGGPVVDCSRLFDNDLPDGWEERRTASGRIQYLNHITRSTQWERPTRPASEYSSPGRPLSCLVDENTPIMTPNGAAGVPADDPRVQERRVRSQRHRNYMSRTHLHTPPDLPEGYEQRTTQQGQVYFLHTQTGVSTWHDPRVPRDLSNVNCEELGPLPPGWEIRNTATGRVYFVDHNNRTTQFTDPRLSANLHLVLNPSPNGSRAAVEAQSSSRPGQLKEQAQSVVSPGNLPEDPECLTVPKYKRDLVQKLKILRQELSQQQPQAGHCRIEVSREEIFEESYRQVMKMRPKDLWKRLMVKFRGEEGLDYGGVAREWLYLLSHEMLNPYYGLFQYSRDDIYTLQINPDSAVNPEHLSYFHFVGRIMGMAVFHGHYIDGGFTLPFYKQLLGKPITLDDMESVDPDLHNSLVWILDNDITGVLDHTFCVEHNAYGEIIQHELKPNGKSIPVTQDTKKEYVRLYVNWRFLRGIEAQFLALQKGFNEVIPQHLLKAFDEKELELIVCGLGKIDINDWKSNTRLKHCTPDSNIVKWFWRAVESYDEERRARLLQFVTGSSRVPLQGFKALQGAAGPRLFTIHQIDASTNNLPKAHTCFNRIDIPPYESYDKLYDKLLTAIEETCGFAVE.

The C2 domain occupies 1–117 (MSNQGVRRNG…KDTGYQRLDL (117 aa)). WW domains follow at residues 157 to 190 (NDLP…RPTR), 251 to 284 (PDLP…DPRV), and 297 to 330 (GPLP…DPRL). The segment at 341–375 (SPNGSRAAVEAQSSSRPGQLKEQAQSVVSPGNLPE) is disordered. The segment covering 351–369 (AQSSSRPGQLKEQAQSVVS) has biased composition (polar residues). An HECT domain is found at 431 to 765 (RPKDLWKRLM…IEETCGFAVE (335 aa)). The Glycyl thioester intermediate role is filled by cysteine 733.

It localises to the nucleus. Its subcellular location is the cytoplasm. The protein resides in the cell membrane. The protein localises to the membrane raft. The catalysed reaction is S-ubiquitinyl-[E2 ubiquitin-conjugating enzyme]-L-cysteine + [acceptor protein]-L-lysine = [E2 ubiquitin-conjugating enzyme]-L-cysteine + N(6)-ubiquitinyl-[acceptor protein]-L-lysine.. It functions in the pathway protein modification; protein ubiquitination. E3 ubiquitin-protein ligase which accepts ubiquitin from an E2 ubiquitin-conjugating enzyme in the form of a thioester and then directly transfers the ubiquitin to targeted substrates. The sequence is that of E3 ubiquitin-protein ligase SMURF2 (smurf2) from Danio rerio (Zebrafish).